A 798-amino-acid chain; its full sequence is Integrin beta-1 (798 aa).

The N-terminal stretch at 1–20 is a signal peptide; sequence MNLQLIFWIGLISSVCCVFG. The Extracellular segment spans residues 21-728; it reads QADEDRCLKA…ETPECPTGPD (708 aa). A PSI domain is found at 26 to 76; it reads RCLKANAKSCGECIQAGPNCGWCTNSTFLQEGMPTSARCDDLEALKKKGCH. 28 disulfide bridges follow: Cys-27-Cys-45, Cys-35-Cys-464, Cys-38-Cys-64, Cys-48-Cys-75, Cys-207-Cys-213, Cys-261-Cys-301, Cys-401-Cys-415, Cys-435-Cys-462, Cys-466-Cys-486, Cys-477-Cys-489, Cys-491-Cys-500, Cys-502-Cys-533, Cys-516-Cys-531, Cys-525-Cys-536, Cys-538-Cys-553, Cys-555-Cys-576, Cys-560-Cys-574, Cys-568-Cys-579, Cys-581-Cys-590, Cys-592-Cys-615, Cys-599-Cys-613, Cys-607-Cys-618, Cys-620-Cys-630, Cys-633-Cys-636, Cys-640-Cys-691, Cys-646-Cys-665, Cys-649-Cys-661, and Cys-699-Cys-723. Residues 75–91 are compositionally biased toward basic and acidic residues; it reads CHPNDTENPRGSKDIKK. A disordered region spans residues 75 to 105; that stretch reads CHPNDTENPRGSKDIKKNKNVTNRSKGTAEK. 2 N-linked (GlcNAc...) asparagine glycosylation sites follow: Asn-94 and Asn-97. In terms of domain architecture, VWFA spans 140–378; the sequence is DYPIDLYYLM…QLIIDAYNSL (239 aa). 2 residues coordinate Mg(2+): Ser-152 and Ser-154. Ca(2+)-binding residues include Ser-154, Asp-157, Asp-158, and Glu-189. The segment at 207–213 is CX3CL1-binding; sequence CTNEQNC. An N-linked (GlcNAc...) asparagine glycan is attached at Asn-212. Ca(2+) is bound by residues Asn-244, Asp-246, Pro-248, and Glu-249. Residue Glu-249 participates in Mg(2+) binding. N-linked (GlcNAc...) asparagine glycosylation is present at Asn-269. A CX3CL1-binding region spans residues 295 to 314; sequence LPNDGQCHLKNDVYTMSHYY. Ala-362 is a binding site for Ca(2+). Residues 383 to 465 are interaction with TMEM182; the sequence is ILENSKLPEG…IILQFICECE (83 aa). Residues Asn-406 and Asn-417 are each glycosylated (N-linked (GlcNAc...) asparagine). I-EGF domains are found at residues 466-501, 502-554, 555-591, and 592-631; these read CQGE…RHCE, CSTD…KFCE, CDNF…SACD, and CSLD…PTCE. N-linked (GlcNAc...) asparagine glycosylation occurs at Asn-481. Asn-520 is a glycosylation site (N-linked (GlcNAc...) asparagine). The N-linked (GlcNAc...) asparagine glycan is linked to Asn-584. The N-linked (GlcNAc...) asparagine glycan is linked to Asn-669. The helical transmembrane segment at 729–749 threads the bilayer; that stretch reads IIPIVAGVVAGIVLIGLALLL. Residues 750-798 are Cytoplasmic-facing; sequence IWKLLMIIHDRREFAKFEKERMNAKWDTGENPIYKSAVTTVVNPKYEGK. The segment at 762–767 is signal for sorting from recycling endosomes; interaction with ACAP1; that stretch reads EFAKFE. Thr-777 is subject to Phosphothreonine. A Phosphotyrosine modification is found at Tyr-783. Phosphoserine is present on Ser-785. An interaction with ITGB1BP1 region spans residues 785-792; it reads SAVTTVVN. Thr-789 is subject to Phosphothreonine. Lys-794 carries the N6-acetyllysine; alternate modification. Lys-794 participates in a covalent cross-link: Glycyl lysine isopeptide (Lys-Gly) (interchain with G-Cter in SUMO1); alternate.

The protein belongs to the integrin beta chain family. Interacts with seprase FAP (seprase); the interaction occurs at the cell surface of invadopodia membrane in a collagen-dependent manner. Heterodimer of an alpha and a beta subunit. Beta-1 associates with either alpha-1, alpha-2, alpha-3, alpha-4, alpha-5, alpha-6, alpha-7, alpha-8, alpha-9, alpha-10, alpha-11 or alpha-V. ITGA6:ITGB1 is found in a complex with CD9; interaction takes place in oocytes and is involved in sperm-egg fusion. Binds LGALS3BP and NMRK2, when associated with alpha-7, but not with alpha-5. Interacts with FLNA, FLNB, FLNC and RANBP9. Interacts with KRT1 in the presence of RACK1 and SRC. Interacts with JAML; integrin alpha-4/beta-1 may regulate leukocyte to endothelial cells adhesion by controlling JAML homodimerization. Interacts with RAB21. Interacts (via the cytoplasmic region) with RAB25 (via the hypervariable C-terminal region). Interacts with MYO10. Interacts with ITGB1BP1 (via C-terminal region); the interaction is a prerequisite for focal adhesion disassembly. Interacts with TLN1; the interaction is prevented by competitive binding of ITGB1BP1. Interacts with ACAP1; required for ITGB1 recycling. Interacts with ASAP3. Interacts with FERMT2; the interaction is inhibited in presence of ITGB1BP1. Interacts with DAB2. Interacts with FGR and HCK. Interacts with alpha-7A and alpha-7B in adult skeletal muscle. Interacts with alpha-7B in cardiomyocytes of adult heart. Interacts with EMP2; the interaction may be direct or indirect and ITGB1 has a heterodimer form. ITGA5:ITGB1 interacts with CCN3. ITGA4:ITGB1 is found in a ternary complex with CX3CR1 and CX3CL1. ITGA5:ITGB1 interacts with FBN1. ITGA5:ITGB1 acts as a receptor for fibronectin FN1 and mediates R-G-D-dependent cell adhesion to FN1. ITGA5:ITGB1 interacts with IL1B. Interacts with MDK. ITGA4:ITGB1 interacts with MDK; this interaction mediates MDK-induced osteoblast cells migration through PXN phosphorylation. ITGA6:ITGB1 interacts with MDK; this interaction mediates MDK-induced neurite-outgrowth. ITGA5:ITGB1 interacts with ACE2. Interacts with TMEM182 and LAMB1. Interacts with tensin TNS3; TNS3 also interacts with PEAK1, thus acting as an adapter molecule to bridge the association of PEAK1 with ITGB1. Interacts with tensin TNS4; the interaction displaces tensin TNS3 from the ITGB1 cytoplasmic tail and promotes ITGB1 stability. Integrin ITGA9:ITGB1 interacts with SPP1/OPN (via N-terminus). Integrin ITGA9:ITGB1 interacts with TNC/TNFN3 (via the 3rd Fibronectin type-III domain). Integrins ITGA4:ITGB1 and ITGA9:ITGB1 interact with SVEP1 (via Sushi domain 21); thereby inhibit Ca(2+) intracellular signaling and as a result repress vasocontraction. ITGA4:ITGB1 and ITGA5:ITGB1 interacts with SELP. Interacts with CD248. ITGA5:ITGB1 interacts with IGFBP1. ITGA4:ITGB1 interacts with BCAM. Interacts with ADGRG6.

It localises to the cell membrane. The protein localises to the cell projection. The protein resides in the invadopodium membrane. Its subcellular location is the ruffle membrane. It is found in the recycling endosome. It localises to the melanosome. The protein localises to the cell junction. The protein resides in the focal adhesion. Its subcellular location is the lamellipodium. It is found in the ruffle. Its function is as follows. Integrins alpha-1/beta-1, alpha-2/beta-1, alpha-10/beta-1 and alpha-11/beta-1 are receptors for collagen. Integrins alpha-1/beta-1 and alpha-2/beta-2 recognize the proline-hydroxylated sequence G-F-P-G-E-R in collagen. Integrins alpha-2/beta-1, alpha-3/beta-1, alpha-4/beta-1, alpha-5/beta-1, alpha-8/beta-1, alpha-10/beta-1, alpha-11/beta-1 and alpha-V/beta-1 are receptors for fibronectin. Alpha-4/beta-1 recognizes one or more domains within the alternatively spliced CS-1 and CS-5 regions of fibronectin. Integrin alpha-5/beta-1 is a receptor for fibrinogen. Integrin alpha-1/beta-1, alpha-2/beta-1, alpha-6/beta-1 and alpha-7/beta-1 are receptors for lamimin. Integrin alpha-6/beta-1 (ITGA6:ITGB1) is present in oocytes and is involved in sperm-egg fusion. Integrin alpha-4/beta-1 is a receptor for VCAM1 and recognizes the sequence Q-I-D-S in VCAM1. Integrin alpha-9/beta-1 is a receptor for VCAM1, cytotactin and osteopontin. It recognizes the sequence A-E-I-D-G-I-E-L in cytotactin. Integrin alpha-3/beta-1 is a receptor for epiligrin, thrombospondin and CSPG4. Integrin alpha-3/beta-1 provides a docking site for FAP (seprase) at invadopodia plasma membranes in a collagen-dependent manner and hence may participate in the adhesion, formation of invadopodia and matrix degradation processes, promoting cell invasion. Alpha-3/beta-1 may mediate with LGALS3 the stimulation by CSPG4 of endothelial cells migration. Integrin alpha-V/beta-1 is a receptor for vitronectin. Beta-1 integrins recognize the sequence R-G-D in a wide array of ligands. When associated with alpha-7/beta-1 integrin, regulates cell adhesion and laminin matrix deposition. Involved in promoting endothelial cell motility and angiogenesis. Involved in osteoblast compaction through the fibronectin fibrillogenesis cell-mediated matrix assembly process and the formation of mineralized bone nodules. May be involved in up-regulation of the activity of kinases such as PKC via binding to KRT1. Together with KRT1 and RACK1, serves as a platform for SRC activation or inactivation. Plays a mechanistic adhesive role during telophase, required for the successful completion of cytokinesis. ITGA4:ITGB1 binds to fractalkine (CX3CL1) and may act as its coreceptor in CX3CR1-dependent fractalkine signaling. ITGA4:ITGB1 and ITGA5:ITGB1 bind to PLA2G2A via a site (site 2) which is distinct from the classical ligand-binding site (site 1) and this induces integrin conformational changes and enhanced ligand binding to site 1. ITGA5:ITGB1 acts as a receptor for fibrillin-1 (FBN1) and mediates R-G-D-dependent cell adhesion to FBN1. ITGA5:ITGB1 is a receptor for IL1B and binding is essential for IL1B signaling. ITGA5:ITGB3 is a receptor for soluble CD40LG and is required for CD40/CD40LG signaling. Plays an important role in myoblast differentiation and fusion during skeletal myogenesis. ITGA9:ITGB1 may play a crucial role in SVEP1/polydom-mediated myoblast cell adhesion. Integrins ITGA9:ITGB1 and ITGA4:ITGB1 repress PRKCA-mediated L-type voltage-gated channel Ca(2+) influx and ROCK-mediated calcium sensitivity in vascular smooth muscle cells via their interaction with SVEP1, thereby inhibit vasocontraction. This chain is Integrin beta-1, found in Camelus bactrianus (Bactrian camel).